A 547-amino-acid polypeptide reads, in one-letter code: CTP synthase (547 aa).

Residues 1-266 (MTKYIFVTGG…GDYLVERLGL (266 aa)) form an amidoligase domain region. Position 13 (Ser-13) interacts with CTP. Position 13 (Ser-13) interacts with UTP. 14–19 (SVGKGI) provides a ligand contact to ATP. Tyr-54 contacts L-glutamine. Asp-71 contacts ATP. The Mg(2+) site is built by Asp-71 and Glu-141. CTP contacts are provided by residues 148-150 (DIE), 187-192 (KTKPTQ), and Lys-223. UTP contacts are provided by residues 187–192 (KTKPTQ) and Lys-223. The Glutamine amidotransferase type-1 domain maps to 291-533 (PIALVGKYVE…IAAAAQTLLA (243 aa)). Position 353 (Gly-353) interacts with L-glutamine. The active-site Nucleophile; for glutamine hydrolysis is Cys-380. Residues 381–384 (LGMQ), Glu-404, and Arg-461 contribute to the L-glutamine site. Residues His-506 and Glu-508 contribute to the active site.

It belongs to the CTP synthase family. As to quaternary structure, homotetramer.

It carries out the reaction UTP + L-glutamine + ATP + H2O = CTP + L-glutamate + ADP + phosphate + 2 H(+). The enzyme catalyses L-glutamine + H2O = L-glutamate + NH4(+). The catalysed reaction is UTP + NH4(+) + ATP = CTP + ADP + phosphate + 2 H(+). It participates in pyrimidine metabolism; CTP biosynthesis via de novo pathway; CTP from UDP: step 2/2. Allosterically activated by GTP, when glutamine is the substrate; GTP has no effect on the reaction when ammonia is the substrate. The allosteric effector GTP functions by stabilizing the protein conformation that binds the tetrahedral intermediate(s) formed during glutamine hydrolysis. Inhibited by the product CTP, via allosteric rather than competitive inhibition. Its function is as follows. Catalyzes the ATP-dependent amination of UTP to CTP with either L-glutamine or ammonia as the source of nitrogen. Regulates intracellular CTP levels through interactions with the four ribonucleotide triphosphates. In Chloroflexus aggregans (strain MD-66 / DSM 9485), this protein is CTP synthase.